The chain runs to 523 residues: Putative glucosylceramidase 1 (523 aa).

The N-terminal stretch at 1–23 (MKSRFLLKIFIFLAVFGVDSVRA) is a signal peptide. An N-linked (GlcNAc...) asparagine glycan is attached at N168. E358 acts as the Nucleophile in catalysis.

The protein belongs to the glycosyl hydrolase 30 family.

The enzyme catalyses a beta-D-glucosylceramide + H2O = an N-acyl-sphingoid base + D-glucose. It carries out the reaction a beta-D-glucosyl-(1&lt;-&gt;1')-N-acylsphing-4-enine + H2O = an N-acylsphing-4-enine + D-glucose. It catalyses the reaction an N-acyl-1-beta-D-glucosyl-15-methylhexadecasphing-4-enine + H2O = an N-acyl-15-methylhexadecasphing-4-enine + D-glucose. The protein operates within lipid metabolism; sphingolipid metabolism. Glucosylceramidase that catalyzes the hydrolysis of glucosylceramides into free ceramides and glucose. C.elegans contains specific sphingoid bases, which are unique or different in structure compared to the sphingoid bases found in other animals. Two examples of these distinctive compounds are: 15-methylhexadecasphinganine and 15-methylhexadecasphing-4-enine. This chain is Putative glucosylceramidase 1 (gba-1), found in Caenorhabditis elegans.